The primary structure comprises 555 residues: Glucose-6-phosphate isomerase (555 aa).

E365 acts as the Proton donor in catalysis. Active-site residues include H396 and K522.

The protein belongs to the GPI family.

It localises to the cytoplasm. The enzyme catalyses alpha-D-glucose 6-phosphate = beta-D-fructose 6-phosphate. Its pathway is carbohydrate biosynthesis; gluconeogenesis. It functions in the pathway carbohydrate degradation; glycolysis; D-glyceraldehyde 3-phosphate and glycerone phosphate from D-glucose: step 2/4. Functionally, catalyzes the reversible isomerization of glucose-6-phosphate to fructose-6-phosphate. The chain is Glucose-6-phosphate isomerase from Psychrobacter cryohalolentis (strain ATCC BAA-1226 / DSM 17306 / VKM B-2378 / K5).